The chain runs to 99 residues: Aspartyl/glutamyl-tRNA(Asn/Gln) amidotransferase subunit C (99 aa).

It belongs to the GatC family. In terms of assembly, heterotrimer of A, B and C subunits.

The enzyme catalyses L-glutamyl-tRNA(Gln) + L-glutamine + ATP + H2O = L-glutaminyl-tRNA(Gln) + L-glutamate + ADP + phosphate + H(+). It catalyses the reaction L-aspartyl-tRNA(Asn) + L-glutamine + ATP + H2O = L-asparaginyl-tRNA(Asn) + L-glutamate + ADP + phosphate + 2 H(+). Allows the formation of correctly charged Asn-tRNA(Asn) or Gln-tRNA(Gln) through the transamidation of misacylated Asp-tRNA(Asn) or Glu-tRNA(Gln) in organisms which lack either or both of asparaginyl-tRNA or glutaminyl-tRNA synthetases. The reaction takes place in the presence of glutamine and ATP through an activated phospho-Asp-tRNA(Asn) or phospho-Glu-tRNA(Gln). The protein is Aspartyl/glutamyl-tRNA(Asn/Gln) amidotransferase subunit C of Rhodococcus erythropolis (strain PR4 / NBRC 100887).